A 313-amino-acid polypeptide reads, in one-letter code: Porphobilinogen deaminase (313 aa).

C242 carries the S-(dipyrrolylmethanemethyl)cysteine modification.

This sequence belongs to the HMBS family. In terms of assembly, monomer. The cofactor is dipyrromethane.

It catalyses the reaction 4 porphobilinogen + H2O = hydroxymethylbilane + 4 NH4(+). It participates in porphyrin-containing compound metabolism; protoporphyrin-IX biosynthesis; coproporphyrinogen-III from 5-aminolevulinate: step 2/4. Functionally, tetrapolymerization of the monopyrrole PBG into the hydroxymethylbilane pre-uroporphyrinogen in several discrete steps. The polypeptide is Porphobilinogen deaminase (Pseudomonas aeruginosa (strain LESB58)).